A 298-amino-acid chain; its full sequence is Multifunctional dioxygenase ausE (298 aa).

Substrate is bound by residues R72 and Q127. Positions 130 and 132 each coordinate Fe cation. Residue T167 participates in substrate binding. Residue H214 participates in Fe cation binding. R226 contacts substrate.

This sequence belongs to the PhyH family. In terms of assembly, homodimer. Fe cation serves as cofactor.

The catalysed reaction is preaustinoid A1 + 2-oxoglutarate + O2 = preaustinoid A2 + succinate + CO2 + H2O. The enzyme catalyses preaustinoid A2 + 2-oxoglutarate + O2 = preaustinoid A3 + succinate + CO2 + H2O. It carries out the reaction berkeleyone A + 2-oxoglutarate + O2 = preaustinoid A + succinate + CO2 + H2O. It functions in the pathway secondary metabolite biosynthesis; terpenoid biosynthesis. In terms of biological role, multifunctional dioxygenase; part of the gene cluster that mediates the biosynthesis of calidodehydroaustin, a fungal meroterpenoid. The first step of the pathway is the synthesis of 3,5-dimethylorsellinic acid by the polyketide synthase ausA. 3,5-dimethylorsellinic acid is then prenylated by the polyprenyl transferase ausN. Further epoxidation by the FAD-dependent monooxygenase ausM and cyclization by the probable terpene cyclase ausL lead to the formation of protoaustinoid A. Protoaustinoid A is then oxidized to spiro-lactone preaustinoid A3 by the combined action of the FAD-binding monooxygenases ausB and ausC, and the dioxygenase ausE. Acid-catalyzed keto-rearrangement and ring contraction of the tetraketide portion of preaustinoid A3 by ausJ lead to the formation of preaustinoid A4. The aldo-keto reductase ausK, with the help of ausH, is involved in the next step by transforming preaustinoid A4 into isoaustinone which is in turn hydroxylated by the P450 monooxygenase ausI to form austinolide. The cytochrome P450 monooxygenase ausG modifies austinolide to austinol. Austinol is further acetylated to austin by the O-acetyltransferase ausP, which spontaneously changes to dehydroaustin. The cytochrome P450 monooxygenase ausR then converts dehydroaustin is into 7-dehydrodehydroaustin. The hydroxylation catalyzed by ausR permits the O-acetyltransferase ausQ to add an additional acetyl group to the molecule, leading to the formation of acetoxydehydroaustin. The short chain dehydrogenase ausT catalyzes the reduction of the double bond present between carbon atoms 1 and 2 to convert 7-dehydrodehydroaustin into 1,2-dihydro-7-hydroxydehydroaustin. AusQ catalyzes not only an acetylation reaction but also the addition of the PKS ausV diketide product to 1,2-dihydro-7-hydroxydehydroaustin, forming precalidodehydroaustin. Finally, the iron/alpha-ketoglutarate-dependent dioxygenase converts precalidodehydroaustin into calidodehydroaustin. The chain is Multifunctional dioxygenase ausE from Aspergillus calidoustus.